Reading from the N-terminus, the 561-residue chain is Mercuric reductase (561 aa).

The HMA domain occupies 1-65; sequence MTTLKITGMT…AVAGLGYEAT (65 aa). A metal cation-binding residues include cysteine 11 and cysteine 14. Alanine 110, glycine 130, and threonine 135 together coordinate FAD. The cysteines at positions 136 and 141 are disulfide-linked. 4 residues coordinate FAD: lysine 145, alanine 211, aspartate 403, and valine 411. Hg(2+) contacts are provided by cysteine 558 and cysteine 559.

This sequence belongs to the class-I pyridine nucleotide-disulfide oxidoreductase family. Homodimer. Requires FAD as cofactor.

It catalyses the reaction Hg + NADP(+) + H(+) = Hg(2+) + NADPH. Functionally, resistance to Hg(2+) in bacteria appears to be governed by a specialized system which includes mercuric reductase. MerA protein is responsible for volatilizing mercury as Hg(0). The chain is Mercuric reductase (merA) from Acinetobacter calcoaceticus.